The sequence spans 274 residues: Imidazole glycerol phosphate synthase subunit HisF (274 aa).

Catalysis depends on residues D11 and D134.

It belongs to the HisA/HisF family. Heterodimer of HisH and HisF.

It is found in the cytoplasm. It carries out the reaction 5-[(5-phospho-1-deoxy-D-ribulos-1-ylimino)methylamino]-1-(5-phospho-beta-D-ribosyl)imidazole-4-carboxamide + L-glutamine = D-erythro-1-(imidazol-4-yl)glycerol 3-phosphate + 5-amino-1-(5-phospho-beta-D-ribosyl)imidazole-4-carboxamide + L-glutamate + H(+). Its pathway is amino-acid biosynthesis; L-histidine biosynthesis; L-histidine from 5-phospho-alpha-D-ribose 1-diphosphate: step 5/9. Functionally, IGPS catalyzes the conversion of PRFAR and glutamine to IGP, AICAR and glutamate. The HisF subunit catalyzes the cyclization activity that produces IGP and AICAR from PRFAR using the ammonia provided by the HisH subunit. This is Imidazole glycerol phosphate synthase subunit HisF from Methanosphaera stadtmanae (strain ATCC 43021 / DSM 3091 / JCM 11832 / MCB-3).